Reading from the N-terminus, the 99-residue chain is MNKTEFIAYMTEHCHNNKHAAHKTLTKADAEKALNLVIDSVISAIKSKHNVNLTGFGSFEIHHRKAREGRNPKTGAKMTIDAYNQPTFRAGRKLKEACN.

The protein belongs to the bacterial histone-like protein family. As to quaternary structure, homodimer.

Functionally, histone-like DNA-binding protein which is capable of wrapping DNA to stabilize it, and thus to prevent its denaturation under extreme environmental conditions. This chain is DNA-binding protein HU (hup), found in Rickettsia typhi (strain ATCC VR-144 / Wilmington).